Reading from the N-terminus, the 287-residue chain is ATP synthase gamma chain (287 aa).

It belongs to the ATPase gamma chain family. In terms of assembly, F-type ATPases have 2 components, CF(1) - the catalytic core - and CF(0) - the membrane proton channel. CF(1) has five subunits: alpha(3), beta(3), gamma(1), delta(1), epsilon(1). CF(0) has three main subunits: a, b and c.

The protein localises to the cell inner membrane. Its function is as follows. Produces ATP from ADP in the presence of a proton gradient across the membrane. The gamma chain is believed to be important in regulating ATPase activity and the flow of protons through the CF(0) complex. In Shigella sonnei (strain Ss046), this protein is ATP synthase gamma chain.